Here is a 234-residue protein sequence, read N- to C-terminus: tRNA (guanine-N(1)-)-methyltransferase (234 aa).

S-adenosyl-L-methionine contacts are provided by residues glycine 115 and 135-140; that span reads VGDYIL.

Belongs to the RNA methyltransferase TrmD family. As to quaternary structure, homodimer.

The protein resides in the cytoplasm. It carries out the reaction guanosine(37) in tRNA + S-adenosyl-L-methionine = N(1)-methylguanosine(37) in tRNA + S-adenosyl-L-homocysteine + H(+). In terms of biological role, specifically methylates guanosine-37 in various tRNAs. This Rickettsia africae (strain ESF-5) protein is tRNA (guanine-N(1)-)-methyltransferase.